The following is an 80-amino-acid chain: DNA-binding protein HU-like (80 aa).

It belongs to the bacterial histone-like protein family.

Histone-like DNA-binding protein which is capable of wrapping DNA to stabilize it, and thus to prevent its denaturation under extreme environmental conditions. This is DNA-binding protein HU-like from Rickettsia rickettsii (strain Sheila Smith).